We begin with the raw amino-acid sequence, 268 residues long: Interferon alpha/beta receptor 2 (268 aa).

The N-terminal stretch at 1-16 (MGPWTLLLLHLPLVVS) is a signal peptide. Residues 17-223 (MLPAPTNVSI…TSPTAANTVP (207 aa)) are Extracellular-facing. 2 Fibronectin type-III domains span residues 18 to 114 (LPAP…LTDT) and 115 to 217 (LLGP…TSPT). Cystine bridges form between cysteine 65/cysteine 74 and cysteine 191/cysteine 211. Residues 224–244 (VVLSVLCAFSLLVVLLCGIVV) traverse the membrane as a helical segment. The Cytoplasmic segment spans residues 245 to 268 (YSGRLLCMHKPLPKTLSSVPLCGG).

The protein belongs to the type II cytokine receptor family. Heterodimer with IFNAR1; forming the receptor for type I interferon.

Its subcellular location is the cell membrane. It localises to the cytoplasm. Functionally, together with IFNAR1, forms the heterodimeric receptor for type I interferons (including interferons alpha, beta, epsilon, omega and kappa). Type I interferon binding activates the JAK-STAT signaling cascade, resulting in transcriptional activation or repression of interferon-regulated genes that encode the effectors of the interferon response. Mechanistically, type I interferon-binding brings the IFNAR1 and IFNAR2 subunits into close proximity with one another, driving their associated Janus kinases (JAKs) (TYK2 bound to IFNAR1 and JAK1 bound to IFNAR2) to cross-phosphorylate one another. The activated kinases phosphorylate specific tyrosine residues on the intracellular domains of IFNAR1 and IFNAR2, forming docking sites for the STAT transcription factors (STAT1, STAT2 and STAT). STAT proteins are then phosphorylated by the JAKs, promoting their translocation into the nucleus to regulate expression of interferon-regulated genes. The protein is Interferon alpha/beta receptor 2 of Oncorhynchus mykiss (Rainbow trout).